A 106-amino-acid chain; its full sequence is Large ribosomal subunit protein bL31B (106 aa).

Positions 85-106 (PVQVAEEPVAKGKKKPSLKKKK) are disordered. Residues 95-106 (KGKKKPSLKKKK) show a composition bias toward basic residues.

The protein belongs to the bacterial ribosomal protein bL31 family. Type B subfamily. In terms of assembly, part of the 50S ribosomal subunit.

This chain is Large ribosomal subunit protein bL31B, found in Chlamydia felis (strain Fe/C-56) (Chlamydophila felis).